Here is a 410-residue protein sequence, read N- to C-terminus: MSSFDYLKTAIKQQGCTLQQVADASGMTKGYLSQLLNAKIKSPSAQKLEALHRFLGLEFPRQKKTIGVVFGKFYPLHTGHIYLIQRACSQVDELHIIMGFDDTRDRALFEDSAMSQQPTVPDRLRWLLQTFKYQKNIRIHAFNEEGMEPYPHGWDVWSNGIKKFMAEKGIQPDLIYTSEEADAPQYMEHLGIETVLVDPKRTFMSISGAQIRENPFRYWEYIPTEVKPFFVRTVAILGGESSGKSTLVNKLANIFNTTSAWEYGRDYVFSHLGGDEIALQYSDYDKIALGHAQYIDFAVKYANKVAFIDTDFVTTQAFCKKYEGREHPFVQALIDEYRFDLVILLENNTPWVADGLRSLGSSVDRKEFQNLLVEMLEENNIEFVRVEEEDYDSRFLRCVELVREMMGEQR.

Residues 7–62 enclose the HTH cro/C1-type domain; it reads LKTAIKQQGCTLQQVADASGMTKGYLSQLLNAKIKSPSAQKLEALHRFLGLEFPRQ. Positions 18–37 form a DNA-binding region, H-T-H motif; the sequence is LQQVADASGMTKGYLSQLLN. A nicotinamide mononucleotide adenylyltransferase region spans residues 63-229; sequence KKTIGVVFGK…EYIPTEVKPF (167 aa). NAD(+) is bound by residues 70 to 73, H77, R104, 144 to 157, 177 to 179, 204 to 206, 259 to 261, and 294 to 297; these read FGKF, EEGM…WDVW, TSE, MSI, SAW, and YIDF. The segment at 230–410 is ribosylnicotinamide kinase; sequence FVRTVAILGG…LVREMMGEQR (181 aa).

In the central section; belongs to the bacterial NMN adenylyltransferase family. The protein in the C-terminal section; belongs to the bacterial RNK family. As to quaternary structure, homotetramer.

Its subcellular location is the cell membrane. The protein resides in the cytoplasm. It catalyses the reaction beta-nicotinamide D-ribonucleotide + ATP + H(+) = diphosphate + NAD(+). The catalysed reaction is beta-nicotinamide D-riboside + ATP = beta-nicotinamide D-ribonucleotide + ADP + H(+). The protein operates within cofactor biosynthesis; NAD(+) biosynthesis [regulation]. It participates in cofactor biosynthesis; NAD(+) biosynthesis; NAD(+) from nicotinamide D-ribonucleotide: step 1/1. Its activity is regulated as follows. Feed-back regulated by NAD. A high level of NAD causes NadR to lose enzymatic activity and repress several NAD synthetic genes; conversely, a low NAD level activates the assimilatory enzymatic activities and leads to derepression of biosynthetic genes. Its function is as follows. This enzyme has three activities: DNA binding, nicotinamide mononucleotide (NMN) adenylyltransferase and ribosylnicotinamide (RN) kinase. The DNA-binding domain binds to the nadB operator sequence in an NAD- and ATP-dependent manner. As NAD levels increase within the cell, the affinity of NadR for the nadB operator regions of nadA, nadB, and pncB increases, repressing the transcription of these genes. The RN kinase activity catalyzes the phosphorylation of RN to form nicotinamide ribonucleotide. The NMN adenylyltransferase activity catalyzes the transfer of the AMP moiety of ATP to nicotinamide ribonucleotide to form NAD(+). The NMN adenylyltransferase domain also functions as the NAD and ATP sensor. In Escherichia coli (strain K12), this protein is Trifunctional NAD biosynthesis/regulator protein NadR (nadR).